We begin with the raw amino-acid sequence, 587 residues long: Methylcrotonoyl-CoA carboxylase beta chain, mitochondrial (587 aa).

The transit peptide at 1 to 26 directs the protein to the mitochondrion; sequence MLRILGRRVVSASKELTSIQQWRIRP. In terms of domain architecture, CoA carboxyltransferase N-terminal spans 68–324; that stretch reads MEGILSELRS…AAKQGMEGTF (257 aa). Positions 68-579 are carboxyltransferase; the sequence is MEGILSELRS…SAALNRPLED (512 aa). The CoA carboxyltransferase C-terminal domain occupies 333 to 579; that stretch reads EPLYDINELR…SAALNRPLED (247 aa). The acyl-CoA binding stretch occupies residues 367-396; sequence EFDEFKKQYGTTLVTGFARIYGQTVGIIGN.

It belongs to the AccD/PCCB family. As to quaternary structure, probably a heterodimer composed of biotin-containing alpha subunits and beta subunits. As to expression, in roots, cotyledons, leaves, flowers, ovaries, siliques and embryos.

The protein resides in the mitochondrion matrix. It carries out the reaction 3-methylbut-2-enoyl-CoA + hydrogencarbonate + ATP = 3-methyl-(2E)-glutaconyl-CoA + ADP + phosphate + H(+). Its pathway is amino-acid degradation; L-leucine degradation; (S)-3-hydroxy-3-methylglutaryl-CoA from 3-isovaleryl-CoA: step 2/3. Functionally, carboxyltransferase subunit of the 3-methylcrotonyl-CoA carboxylase, an enzyme that catalyzes the conversion of 3-methylcrotonyl-CoA to 3-methylglutaconyl-CoA, a critical step for leucine and isovaleric acid catabolism. This Arabidopsis thaliana (Mouse-ear cress) protein is Methylcrotonoyl-CoA carboxylase beta chain, mitochondrial (MCCB).